The primary structure comprises 249 residues: 5'-nucleotidase SurE (249 aa).

Asp-8, Asp-9, Ser-39, and Asn-91 together coordinate a divalent metal cation.

The protein belongs to the SurE nucleotidase family. Requires a divalent metal cation as cofactor.

It is found in the cytoplasm. The enzyme catalyses a ribonucleoside 5'-phosphate + H2O = a ribonucleoside + phosphate. Its function is as follows. Nucleotidase that shows phosphatase activity on nucleoside 5'-monophosphates. In Vesicomyosocius okutanii subsp. Calyptogena okutanii (strain HA), this protein is 5'-nucleotidase SurE.